A 439-amino-acid polypeptide reads, in one-letter code: Xaa-Pro dipeptidase (439 aa).

D244, D255, H335, E380, and E419 together coordinate Mn(2+).

This sequence belongs to the peptidase M24B family. Bacterial-type prolidase subfamily. The cofactor is Mn(2+).

It carries out the reaction Xaa-L-Pro dipeptide + H2O = an L-alpha-amino acid + L-proline. Functionally, splits dipeptides with a prolyl residue in the C-terminal position. The chain is Xaa-Pro dipeptidase from Shewanella oneidensis (strain ATCC 700550 / JCM 31522 / CIP 106686 / LMG 19005 / NCIMB 14063 / MR-1).